The following is an 871-amino-acid chain: Protein pob1 (871 aa).

In terms of domain architecture, SH3 spans 2–65 (ASQRFVIALH…PASHVELISD (64 aa)). The disordered stretch occupies residues 42–168 (WWEGEDEQGN…PSSDLSNFNT (127 aa)). The span at 62-80 (LISDERSDSSDSRRGKEDF) shows a compositional bias: basic and acidic residues. Low complexity-rich tracts occupy residues 88-100 (TRSS…STSS) and 109-124 (LYSN…SILN). The segment covering 131 to 168 (SKPSVPSNFNSMFPSSKQEGPSPLLDNQPSSDLSNFNT) has biased composition (polar residues). 2 positions are modified to phosphoserine: Ser-224 and Ser-225. A Phosphotyrosine modification is found at Tyr-229. Ser-241 is modified (phosphoserine). One can recognise an SAM domain in the interval 250–313 (WSTEEVVEWL…LRKIQQLKDS (64 aa)). Residues 329–343 (ISVSQSSDSSSSIPK) are compositionally biased toward low complexity. 2 disordered regions span residues 329-371 (ISVS…NRPT) and 384-670 (PDLD…KSKR). 2 stretches are compositionally biased toward polar residues: residues 384-395 (PDLDSSPSTDWN) and 404-451 (TPSS…NSGL). Ser-433, Ser-439, and Ser-440 each carry phosphoserine. Phosphothreonine is present on Thr-442. At Ser-444 the chain carries Phosphoserine. Low complexity predominate over residues 456 to 467 (TEPISSPSTSSI). Over residues 492 to 511 (QPSSNVPTKFTGGASESSSV) the composition is skewed to polar residues. A Phosphoserine modification is found at Ser-549. Residues 549–560 (SPSSISSRLPSS) are compositionally biased toward low complexity. 2 stretches are compositionally biased toward polar residues: residues 561 to 574 (NLEQ…TKSP) and 583 to 606 (KASS…NYAT). The region spanning 698-808 (TADCHGWMRK…WSSAFLKATV (111 aa)) is the PH domain.

The protein localises to the cytoplasm. The protein resides in the membrane. Has a role in cell elongation and separation. The sequence is that of Protein pob1 (pob1) from Schizosaccharomyces pombe (strain 972 / ATCC 24843) (Fission yeast).